A 604-amino-acid chain; its full sequence is Putative O-acetyltransferase SACOL0978 (604 aa).

Helical transmembrane passes span 15–35 (YIPG…IYHL), 43–63 (GFLG…SLLL), 85–105 (LLPA…LLKS), 150–170 (AIEE…LLTI), 176–196 (IGFI…FIYS), 212–232 (LQTL…KLKN), 240–260 (YVID…FFII), 267–287 (IYDG…ASVV), 310–330 (YSLY…YVDG), 332–352 (IPVY…ELSY), and 377–397 (FIRM…LVGA). Residues serine 459, aspartate 581, and histidine 584 contribute to the active site.

Belongs to the acyltransferase 3 family.

It localises to the cell membrane. The polypeptide is Putative O-acetyltransferase SACOL0978 (Staphylococcus aureus (strain COL)).